The sequence spans 800 residues: Phenylalanine--tRNA ligase beta subunit (800 aa).

In terms of domain architecture, tRNA-binding spans T39–L154. Residues S408 to S483 form the B5 domain. D461, D467, E470, and E471 together coordinate Mg(2+). One can recognise an FDX-ACB domain in the interval P708–R800.

The protein belongs to the phenylalanyl-tRNA synthetase beta subunit family. Type 1 subfamily. As to quaternary structure, tetramer of two alpha and two beta subunits. The cofactor is Mg(2+).

Its subcellular location is the cytoplasm. The catalysed reaction is tRNA(Phe) + L-phenylalanine + ATP = L-phenylalanyl-tRNA(Phe) + AMP + diphosphate + H(+). This is Phenylalanine--tRNA ligase beta subunit from Staphylococcus epidermidis (strain ATCC 12228 / FDA PCI 1200).